The chain runs to 255 residues: Homeobox protein Hox-D4 (255 aa).

Residues 31-127 (EQGADYYGGG…PKQPPSGTAL (97 aa)) form a disordered region. Residues 94-107 (EPCPAPPAPPPAPL) show a composition bias toward pro residues. Positions 133–138 (VYPWMK) match the Antp-type hexapeptide motif. Residues 154 to 213 (PKRSRTAYTRQQVLELEKEFHFNRYLTRRRRIEIAHTLCLSERQIKIWFQNRRMKWKKDH) constitute a DNA-binding region (homeobox). The tract at residues 212–255 (DHKLPNTKGRSSSSSSSSSCSSSVAPSQHLQPMAKDHHTDLTTL) is disordered. Over residues 222–234 (SSSSSSSSSCSSS) the composition is skewed to low complexity. The span at 245–255 (AKDHHTDLTTL) shows a compositional bias: basic and acidic residues.

The protein belongs to the Antp homeobox family. Deformed subfamily. In terms of assembly, forms a DNA-binding heterodimer with transcription factor PBX1.

It localises to the nucleus. Its function is as follows. Sequence-specific transcription factor which is part of a developmental regulatory system that provides cells with specific positional identities on the anterior-posterior axis. This chain is Homeobox protein Hox-D4 (HOXD4), found in Homo sapiens (Human).